The following is a 261-amino-acid chain: Mlc titration factor A (261 aa).

Zn(2+)-binding residues include histidine 111, histidine 148, histidine 152, and glutamate 211.

It belongs to the MtfA family. Interacts with Mlc. It depends on Zn(2+) as a cofactor.

The protein resides in the cytoplasm. Functionally, involved in the modulation of the activity of the glucose-phosphotransferase system (glucose-PTS). Interacts with the transcriptional repressor Mlc, preventing its interaction with DNA and leading to the modulation of expression of genes regulated by Mlc, including ptsG, which encodes the PTS system glucose-specific EIICB component. Its function is as follows. Shows zinc-dependent metallopeptidase activity. In Edwardsiella ictaluri (strain 93-146), this protein is Mlc titration factor A.